We begin with the raw amino-acid sequence, 464 residues long: D-inositol 3-phosphate glycosyltransferase (464 aa).

Residues 1 to 20 (MEGAPRRPDRHARSEEERHV) are compositionally biased toward basic and acidic residues. The disordered stretch occupies residues 1–44 (MEGAPRRPDRHARSEEERHVSQYASRLGRRSPAAPTRRRMLRKP). Position 53 (H53) interacts with 1D-myo-inositol 3-phosphate. Residues 59–60 (QP) and G67 each bind UDP-N-acetyl-alpha-D-glucosamine. 1D-myo-inositol 3-phosphate-binding positions include 64 to 69 (DAGGMN), K122, Y155, T179, and R199. Residues R274, K279, and V340 each contribute to the UDP-N-acetyl-alpha-D-glucosamine site. Residues F349, R350, and A352 each coordinate Mg(2+). The UDP-N-acetyl-alpha-D-glucosamine site is built by E362 and E370. T376 is a Mg(2+) binding site.

It belongs to the glycosyltransferase group 1 family. MshA subfamily. Homodimer.

The catalysed reaction is 1D-myo-inositol 3-phosphate + UDP-N-acetyl-alpha-D-glucosamine = 1D-myo-inositol 2-acetamido-2-deoxy-alpha-D-glucopyranoside 3-phosphate + UDP + H(+). Catalyzes the transfer of a N-acetyl-glucosamine moiety to 1D-myo-inositol 3-phosphate to produce 1D-myo-inositol 2-acetamido-2-deoxy-glucopyranoside 3-phosphate in the mycothiol biosynthesis pathway. The protein is D-inositol 3-phosphate glycosyltransferase of Streptomyces avermitilis (strain ATCC 31267 / DSM 46492 / JCM 5070 / NBRC 14893 / NCIMB 12804 / NRRL 8165 / MA-4680).